Consider the following 105-residue polypeptide: Cell division protein FtsL (105 aa).

At 1 to 24 (MAEKMEKTGQILQMQLKRFSRVEK) the chain is on the cytoplasmic side. The chain crosses the membrane as a helical span at residues 25–45 (AFYFSIAVTTLIVAISIIFMQ). Residues 46–105 (TKLLQVQNDLTKINAQIEEKKTELDDAKQEVNELLRAERLKEIANSHDLQLNNENIRIAE) lie on the Extracellular side of the membrane.

Belongs to the FtsL family.

The protein localises to the cell membrane. Essential cell division protein. The polypeptide is Cell division protein FtsL (Streptococcus pneumoniae (strain ATCC BAA-255 / R6)).